The primary structure comprises 578 residues: Hyaluronan synthase 1 (578 aa).

At 1–25 (MRQQDAPKPTPAACRCSGLARRVLT) the chain is on the cytoplasmic side. The chain crosses the membrane as a helical span at residues 26-46 (IAFALLILGLMTWAYAAGVPL). The Extracellular portion of the chain corresponds to 47–52 (ASDRYG). Residues 53-73 (LLAFGLYGAFLSAHLVAQSLF) traverse the membrane as a helical segment. Topologically, residues 74–399 (AYLEHRRVAA…NALWWHRHHA (326 aa)) are cytoplasmic. Residues 400–420 (WMTYEAVVSGLFPFFVAATVL) traverse the membrane as a helical segment. The Extracellular segment spans residues 421 to 430 (RLFYAGRPWA). Residues 431 to 451 (LLWVLLCVQGVALAKAAFAAW) traverse the membrane as a helical segment. Topologically, residues 452–457 (LRGCLR) are cytoplasmic. Residues 458–478 (MVLLSLYAPLYMCGLLPAKFL) form a helical membrane-spanning segment. Residues 479 to 497 (ALVTMNQSGWGTSGRRKLA) are Extracellular-facing. The helical transmembrane segment at 498 to 518 (ANYVPLLPLALWALLLLGGLV) threads the bilayer. Topologically, residues 519 to 540 (RSVAHEARADWSGPSRAAEAYH) are cytoplasmic. A helical transmembrane segment spans residues 541–561 (LAAGAGAYVGYWVAMLTLYWV). The Extracellular segment spans residues 562 to 578 (GVRRLCRRRTGGYRVQV).

Belongs to the NodC/HAS family. The cofactor is Mg(2+). As to expression, widely expressed. Highly expressed in ovary followed by spleen, thymus, prostate, testes and large intestine. Weakly expressed in small intestine.

It is found in the membrane. The enzyme catalyses [hyaluronan](n) + UDP-N-acetyl-alpha-D-glucosamine = N-acetyl-beta-D-glucosaminyl-(1-&gt;4)-[hyaluronan](n) + UDP + H(+). It carries out the reaction N-acetyl-beta-D-glucosaminyl-(1-&gt;4)-[hyaluronan](n) + UDP-alpha-D-glucuronate = [hyaluronan](n+1) + UDP + H(+). Its pathway is glycan biosynthesis; hyaluronan biosynthesis. Its function is as follows. Catalyzes the addition of GlcNAc or GlcUA monosaccharides to the nascent hyaluronan polymer. Therefore, it is essential to hyaluronan synthesis a major component of most extracellular matrices that has a structural role in tissues architectures and regulates cell adhesion, migration and differentiation. This is one of the isozymes catalyzing that reaction. Also able to catalyze the synthesis of chito-oligosaccharide depending on the substrate. The chain is Hyaluronan synthase 1 (HAS1) from Homo sapiens (Human).